We begin with the raw amino-acid sequence, 164 residues long: Phosphopantetheine adenylyltransferase (164 aa).

S9 is a binding site for substrate. ATP-binding positions include 9–10 (SF) and H17. Positions 41, 73, and 87 each coordinate substrate. Residues 88-90 (GLR), E98, and 122-128 (YSYLSSS) contribute to the ATP site.

The protein belongs to the bacterial CoaD family. In terms of assembly, homohexamer. Mg(2+) serves as cofactor.

Its subcellular location is the cytoplasm. The enzyme catalyses (R)-4'-phosphopantetheine + ATP + H(+) = 3'-dephospho-CoA + diphosphate. It functions in the pathway cofactor biosynthesis; coenzyme A biosynthesis; CoA from (R)-pantothenate: step 4/5. Functionally, reversibly transfers an adenylyl group from ATP to 4'-phosphopantetheine, yielding dephospho-CoA (dPCoA) and pyrophosphate. This Rhodococcus opacus (strain B4) protein is Phosphopantetheine adenylyltransferase.